The sequence spans 606 residues: Aspartate--tRNA(Asp/Asn) ligase (606 aa).

An L-aspartate-binding site is contributed by Glu196. The aspartate stretch occupies residues 220-223 (QIFK). Arg242 lines the L-aspartate pocket. Residues 242–244 (RDE) and Gln251 contribute to the ATP site. His465 serves as a coordination point for L-aspartate. Glu499 is an ATP binding site. Arg506 provides a ligand contact to L-aspartate. 551 to 554 (GMDR) is an ATP binding site.

Belongs to the class-II aminoacyl-tRNA synthetase family. Type 1 subfamily. Homodimer.

It localises to the cytoplasm. It catalyses the reaction tRNA(Asx) + L-aspartate + ATP = L-aspartyl-tRNA(Asx) + AMP + diphosphate. Its function is as follows. Aspartyl-tRNA synthetase with relaxed tRNA specificity since it is able to aspartylate not only its cognate tRNA(Asp) but also tRNA(Asn). Reaction proceeds in two steps: L-aspartate is first activated by ATP to form Asp-AMP and then transferred to the acceptor end of tRNA(Asp/Asn). The protein is Aspartate--tRNA(Asp/Asn) ligase of Oleidesulfovibrio alaskensis (strain ATCC BAA-1058 / DSM 17464 / G20) (Desulfovibrio alaskensis).